The following is a 90-amino-acid chain: Putative F-box protein At5g16285 (90 aa).

The region spanning 1–46 (MRIESLLQHDVVERILERLAVNSLPRFKAVSKQWKSTIESQFFQGK) is the F-box domain.

The polypeptide is Putative F-box protein At5g16285 (Arabidopsis thaliana (Mouse-ear cress)).